Reading from the N-terminus, the 159-residue chain is Phosphopantetheine adenylyltransferase (159 aa).

Thr-9 contacts substrate. Residues 9 to 10 and His-17 each bind ATP; that span reads TF. 3 residues coordinate substrate: Lys-41, Leu-73, and Arg-87. Residues 88-90, Glu-98, and 123-129 each bind ATP; these read GLR and YAFLSST.

The protein belongs to the bacterial CoaD family. In terms of assembly, homohexamer. Mg(2+) serves as cofactor.

It is found in the cytoplasm. The catalysed reaction is (R)-4'-phosphopantetheine + ATP + H(+) = 3'-dephospho-CoA + diphosphate. Its pathway is cofactor biosynthesis; coenzyme A biosynthesis; CoA from (R)-pantothenate: step 4/5. Its function is as follows. Reversibly transfers an adenylyl group from ATP to 4'-phosphopantetheine, yielding dephospho-CoA (dPCoA) and pyrophosphate. The polypeptide is Phosphopantetheine adenylyltransferase (Vibrio campbellii (strain ATCC BAA-1116)).